The primary structure comprises 168 residues: Photosystem I assembly protein Ycf3 (168 aa).

TPR repeat units lie at residues 35–68 (AFTY…EIDP), 72–105 (SYIL…NPFL), and 120–153 (GEQA…TPGN).

It belongs to the Ycf3 family.

The protein localises to the plastid. It is found in the chloroplast thylakoid membrane. In terms of biological role, essential for the assembly of the photosystem I (PSI) complex. May act as a chaperone-like factor to guide the assembly of the PSI subunits. The chain is Photosystem I assembly protein Ycf3 from Nicotiana sylvestris (Wood tobacco).